Here is a 312-residue protein sequence, read N- to C-terminus: Glycine--tRNA ligase alpha subunit (312 aa).

The protein belongs to the class-II aminoacyl-tRNA synthetase family. In terms of assembly, tetramer of two alpha and two beta subunits.

The protein localises to the cytoplasm. It carries out the reaction tRNA(Gly) + glycine + ATP = glycyl-tRNA(Gly) + AMP + diphosphate. This is Glycine--tRNA ligase alpha subunit from Delftia acidovorans (strain DSM 14801 / SPH-1).